Consider the following 157-residue polypeptide: Succinate dehydrogenase [ubiquinone] cytochrome b small subunit, mitochondrial (157 aa).

A mitochondrion-targeting transit peptide spans 1 to 45 (MAALVLLRAGLARPRGVPTALLRGTLLRHSAVLTAAADRSAPARQ). Topologically, residues 46 to 61 (SHGGAPQGHGSSKAAS) are mitochondrial matrix. A helical membrane pass occupies residues 62–83 (LHWTSERAVSALLLGLLPAAYL). At 84–88 (YPGPA) the chain is on the mitochondrial intermembrane side. Residues 89–109 (VDYSLAAALTLHGHWGLGQVI) form a helical membrane-spanning segment. Histidine 100 provides a ligand contact to heme b. The Mitochondrial matrix segment spans residues 110 to 118 (TDYVHGDTP). Residue tyrosine 112 participates in a ubiquinone binding. A helical membrane pass occupies residues 119–140 (IKVANTGLYVLSAITFTGLCYF). At 141–157 (NYYDVGICKAVAMLWSI) the chain is on the mitochondrial intermembrane side.

The protein belongs to the CybS family. In terms of assembly, component of complex II composed of four subunits: the flavoprotein (FP) SDHA, iron-sulfur protein (IP) SDHB, and a cytochrome b560 composed of SDHC and SDHD.

It is found in the mitochondrion inner membrane. The protein operates within carbohydrate metabolism; tricarboxylic acid cycle. Membrane-anchoring subunit of succinate dehydrogenase (SDH) that is involved in complex II of the mitochondrial electron transport chain and is responsible for transferring electrons from succinate to ubiquinone (coenzyme Q). SDH also oxidizes malate to the non-canonical enol form of oxaloacetate, enol-oxaloacetate. Enol-oxaloacetate, which is a potent inhibitor of the succinate dehydrogenase activity, is further isomerized into keto-oxaloacetate. This chain is Succinate dehydrogenase [ubiquinone] cytochrome b small subunit, mitochondrial (SDHD), found in Gallus gallus (Chicken).